A 395-amino-acid chain; its full sequence is Elongation factor Tu (395 aa).

Residues 10–205 enclose the tr-type G domain; the sequence is KPHVNIGTIG…VDSYIPLPPR (196 aa). Positions 19 to 26 are G1; that stretch reads GHVDHGKT. Residue 19–26 coordinates GTP; the sequence is GHVDHGKT. T26 is a binding site for Mg(2+). The segment at 60 to 64 is G2; sequence GITIN. The segment at 81-84 is G3; sequence DCPG. Residues 81 to 85 and 136 to 139 contribute to the GTP site; these read DCPGH and NKVD. A G4 region spans residues 136–139; that stretch reads NKVD. Positions 174 to 176 are G5; it reads SAT.

The protein belongs to the TRAFAC class translation factor GTPase superfamily. Classic translation factor GTPase family. EF-Tu/EF-1A subfamily. In terms of assembly, monomer.

Its subcellular location is the cytoplasm. It catalyses the reaction GTP + H2O = GDP + phosphate + H(+). Functionally, GTP hydrolase that promotes the GTP-dependent binding of aminoacyl-tRNA to the A-site of ribosomes during protein biosynthesis. The chain is Elongation factor Tu from Terrimonas ferruginea (Flavobacterium ferrugineum).